Reading from the N-terminus, the 1189-residue chain is Pesticidal crystal protein Cry1Ca (1189 aa).

It belongs to the delta endotoxin family.

Its function is as follows. Promotes colloidosmotic lysis by binding to the midgut epithelial cells of many lepidopteran larvae including Spodoptera species. The protein is Pesticidal crystal protein Cry1Ca (cry1Ca) of Bacillus thuringiensis subsp. aizawai.